The chain runs to 373 residues: Beta sliding clamp (373 aa).

This sequence belongs to the beta sliding clamp family. In terms of assembly, forms a ring-shaped head-to-tail homodimer around DNA which binds and tethers DNA polymerases and other proteins to the DNA. The DNA replisome complex has a single clamp-loading complex (3 tau and 1 each of delta, delta', psi and chi subunits) which binds 3 Pol III cores (1 core on the leading strand and 2 on the lagging strand) each with a beta sliding clamp dimer. Additional proteins in the replisome are other copies of gamma, psi and chi, Ssb, DNA helicase and RNA primase.

The protein localises to the cytoplasm. In terms of biological role, confers DNA tethering and processivity to DNA polymerases and other proteins. Acts as a clamp, forming a ring around DNA (a reaction catalyzed by the clamp-loading complex) which diffuses in an ATP-independent manner freely and bidirectionally along dsDNA. Initially characterized for its ability to contact the catalytic subunit of DNA polymerase III (Pol III), a complex, multichain enzyme responsible for most of the replicative synthesis in bacteria; Pol III exhibits 3'-5' exonuclease proofreading activity. The beta chain is required for initiation of replication as well as for processivity of DNA replication. In Mycoplasmopsis pulmonis (strain UAB CTIP) (Mycoplasma pulmonis), this protein is Beta sliding clamp (dnaN).